The chain runs to 158 residues: 6,7-dimethyl-8-ribityllumazine synthase (158 aa).

5-amino-6-(D-ribitylamino)uracil-binding positions include phenylalanine 23, 61 to 63 (SFE), and 85 to 87 (AVI). 90-91 (ET) is a (2S)-2-hydroxy-3-oxobutyl phosphate binding site. Catalysis depends on histidine 93, which acts as the Proton donor. A 5-amino-6-(D-ribitylamino)uracil-binding site is contributed by phenylalanine 118. Arginine 132 serves as a coordination point for (2S)-2-hydroxy-3-oxobutyl phosphate.

This sequence belongs to the DMRL synthase family.

It carries out the reaction (2S)-2-hydroxy-3-oxobutyl phosphate + 5-amino-6-(D-ribitylamino)uracil = 6,7-dimethyl-8-(1-D-ribityl)lumazine + phosphate + 2 H2O + H(+). It functions in the pathway cofactor biosynthesis; riboflavin biosynthesis; riboflavin from 2-hydroxy-3-oxobutyl phosphate and 5-amino-6-(D-ribitylamino)uracil: step 1/2. Its function is as follows. Catalyzes the formation of 6,7-dimethyl-8-ribityllumazine by condensation of 5-amino-6-(D-ribitylamino)uracil with 3,4-dihydroxy-2-butanone 4-phosphate. This is the penultimate step in the biosynthesis of riboflavin. This Prochlorococcus marinus subsp. pastoris (strain CCMP1986 / NIES-2087 / MED4) protein is 6,7-dimethyl-8-ribityllumazine synthase.